The chain runs to 586 residues: Scavenger receptor cysteine-rich domain-containing group B protein (586 aa).

The tract at residues 1 to 33 (MGPSERPSIGWTPKEAEMQIGPQPDGWSRGWKP) is disordered. An N-terminal signal peptide occupies residues 1–58 (MGPSERPSIGWTPKEAEMQIGPQPDGWSRGWKPGDRGAVPLPLSPALSFLLLFPLASA). SRCR domains follow at residues 69-169 (LRLV…VLCD), 200-300 (VRLV…VLCA), 355-455 (LRLV…ALCA), and 484-584 (LRLA…VLCQ). 12 cysteine pairs are disulfide-bonded: cysteine 94/cysteine 158, cysteine 107/cysteine 168, cysteine 138/cysteine 148, cysteine 225/cysteine 289, cysteine 238/cysteine 299, cysteine 269/cysteine 279, cysteine 380/cysteine 444, cysteine 393/cysteine 454, cysteine 424/cysteine 434, cysteine 509/cysteine 573, cysteine 522/cysteine 583, and cysteine 553/cysteine 563.

The protein resides in the secreted. The protein is Scavenger receptor cysteine-rich domain-containing group B protein of Mus musculus (Mouse).